A 1349-amino-acid polypeptide reads, in one-letter code: Serine-aspartate repeat-containing protein D (1349 aa).

Residues Met-1–Ile-35 form the signal peptide. The YSIRK-G/S signaling motif motif lies at Phe-23 to Ser-34. The ligand binding A region stretch occupies residues Leu-36–Glu-568. A disordered region spans residues Glu-54–Ser-185. Composition is skewed to polar residues over residues Glu-62 to Gln-71 and Glu-94 to Asn-108. The segment covering Lys-130 to Asn-145 has biased composition (basic and acidic residues). 2 stretches are compositionally biased toward polar residues: residues Thr-146 to Ala-155 and Asn-163 to Asn-173. Residues Glu-174 to Thr-183 are compositionally biased toward basic and acidic residues. CNA-B domains are found at residues Val-569–Pro-680, Lys-681–Pro-791, Lys-792–Pro-901, Thr-902–Pro-1012, and Lys-1013–Thr-1123. Disordered regions lie at residues Phe-856–Thr-883, Tyr-972–Thr-992, and Ala-1081–Ala-1325. Polar residues-rich tracts occupy residues Ser-860–Ser-869 and Tyr-972–Asn-981. 2 stretches are compositionally biased toward acidic residues: residues Thr-1091 to Glu-1101 and Tyr-1118 to Ser-1288. The short motif at Leu-1312–Gly-1316 is the LPXTG sorting signal element. Thr-1315 carries the post-translational modification Pentaglycyl murein peptidoglycan amidated threonine. The propeptide at Gly-1316–Lys-1349 is removed by sortase.

Belongs to the serine-aspartate repeat-containing protein (SDr) family. In terms of assembly, interacts with host DSG1; this interaction increases S.aureus adherence to keratinocytes.

The protein localises to the secreted. It localises to the cell wall. Its function is as follows. Cell surface-associated calcium-binding protein which plays an important role in adhesion and pathogenesis. Mediates interactions with components of the extracellular matrix such as host DSG1 to promote bacterial adhesion to host cells. Contributes to the resistance to killing by innate immune components such as neutrophils present in blood and thus attenuates bacterial clearance. This Staphylococcus aureus (strain NCTC 8325 / PS 47) protein is Serine-aspartate repeat-containing protein D (sdrD).